Reading from the N-terminus, the 459-residue chain is Probable 3-ketoacyl-CoA synthase 14 (459 aa).

An N-terminal signal peptide occupies residues Met1–Leu25. Residues Phe32–Tyr52 traverse the membrane as a helical segment. Residues Tyr52 to Leu334 form the FAE domain. Residues His268, His352, His356, His385, and Asn389 contribute to the active site.

This sequence belongs to the thiolase-like superfamily. Chalcone/stilbene synthases family. In terms of tissue distribution, expressed in siliques.

The protein localises to the membrane. The catalysed reaction is a very-long-chain acyl-CoA + malonyl-CoA + H(+) = a very-long-chain 3-oxoacyl-CoA + CO2 + CoA. Its pathway is lipid metabolism; fatty acid biosynthesis. In Arabidopsis thaliana (Mouse-ear cress), this protein is Probable 3-ketoacyl-CoA synthase 14.